The chain runs to 284 residues: Pantothenate synthetase (284 aa).

30–37 (MGNLHEGH) contributes to the ATP binding site. H37 functions as the Proton donor in the catalytic mechanism. Q61 is a binding site for (R)-pantoate. Q61 contributes to the beta-alanine binding site. Position 149 to 152 (149 to 152 (GEKD)) interacts with ATP. Q155 is a (R)-pantoate binding site. Residues V178 and 186 to 189 (LSSR) each bind ATP.

This sequence belongs to the pantothenate synthetase family. Homodimer.

Its subcellular location is the cytoplasm. The catalysed reaction is (R)-pantoate + beta-alanine + ATP = (R)-pantothenate + AMP + diphosphate + H(+). The protein operates within cofactor biosynthesis; (R)-pantothenate biosynthesis; (R)-pantothenate from (R)-pantoate and beta-alanine: step 1/1. Catalyzes the condensation of pantoate with beta-alanine in an ATP-dependent reaction via a pantoyl-adenylate intermediate. The sequence is that of Pantothenate synthetase from Sodalis glossinidius (strain morsitans).